We begin with the raw amino-acid sequence, 382 residues long: UDP-4-amino-4-deoxy-L-arabinose--oxoglutarate aminotransferase (382 aa).

Lys183 carries the N6-(pyridoxal phosphate)lysine modification.

It belongs to the DegT/DnrJ/EryC1 family. ArnB subfamily. In terms of assembly, homodimer. It depends on pyridoxal 5'-phosphate as a cofactor.

The catalysed reaction is UDP-4-amino-4-deoxy-beta-L-arabinose + 2-oxoglutarate = UDP-beta-L-threo-pentopyranos-4-ulose + L-glutamate. Its pathway is nucleotide-sugar biosynthesis; UDP-4-deoxy-4-formamido-beta-L-arabinose biosynthesis; UDP-4-deoxy-4-formamido-beta-L-arabinose from UDP-alpha-D-glucuronate: step 2/3. It participates in bacterial outer membrane biogenesis; lipopolysaccharide biosynthesis. Its function is as follows. Catalyzes the conversion of UDP-4-keto-arabinose (UDP-Ara4O) to UDP-4-amino-4-deoxy-L-arabinose (UDP-L-Ara4N). The modified arabinose is attached to lipid A and is required for resistance to polymyxin and cationic antimicrobial peptides. This chain is UDP-4-amino-4-deoxy-L-arabinose--oxoglutarate aminotransferase, found in Pseudomonas fluorescens (strain Pf0-1).